A 106-amino-acid chain; its full sequence is Thioredoxin-2 (106 aa).

Residues 1–106 (MVYQVKDKAD…RLEDVIKANI (106 aa)) form the Thioredoxin domain. Catalysis depends on nucleophile residues Cys32 and Cys35. Cys32 and Cys35 are oxidised to a cystine.

Belongs to the thioredoxin family. In terms of assembly, monomer.

In terms of biological role, participates in various redox reactions through the reversible oxidation of its active center dithiol to a disulfide and catalyzes dithiol-disulfide exchange reactions. As a reducing substrate of peroxiredoxin 1, thioredoxin 2 is preferred over thioredoxin 1. This chain is Thioredoxin-2, found in Drosophila melanogaster (Fruit fly).